We begin with the raw amino-acid sequence, 331 residues long: RNA 3'-terminal phosphate cyclase (331 aa).

Residues glutamine 100 and 276–280 (HLADQ) contribute to the ATP site. The Tele-AMP-histidine intermediate role is filled by histidine 301.

This sequence belongs to the RNA 3'-terminal cyclase family. Type 1 subfamily.

The protein localises to the cytoplasm. It catalyses the reaction a 3'-end 3'-phospho-ribonucleotide-RNA + ATP = a 3'-end 2',3'-cyclophospho-ribonucleotide-RNA + AMP + diphosphate. Its function is as follows. Catalyzes the conversion of 3'-phosphate to a 2',3'-cyclic phosphodiester at the end of RNA. The mechanism of action of the enzyme occurs in 3 steps: (A) adenylation of the enzyme by ATP; (B) transfer of adenylate to an RNA-N3'P to produce RNA-N3'PP5'A; (C) and attack of the adjacent 2'-hydroxyl on the 3'-phosphorus in the diester linkage to produce the cyclic end product. The biological role of this enzyme is unknown but it is likely to function in some aspects of cellular RNA processing. The chain is RNA 3'-terminal phosphate cyclase from Methanosarcina barkeri (strain Fusaro / DSM 804).